The sequence spans 89 residues: Phytosulfokines 1 (89 aa).

A signal peptide spans 1–22 (MVNPGRTARALCLLCLALLLLG). A propeptide spanning residues 23–79 (QDTHSRKLLLQEKHSHGVGNGTTTTQEPSRENGGSTGSNNNGQLQFDSAKWEEFHTD) is cleaved from the precursor. Residues 33–70 (QEKHSHGVGNGTTTTQEPSRENGGSTGSNNNGQLQFDS) form a disordered region. N42 is a glycosylation site (N-linked (GlcNAc...) asparagine). Y80 and Y82 each carry sulfotyrosine. The propeptide occupies 85 to 89 (DVKKP).

The protein belongs to the phytosulfokine family. In terms of processing, sulfation is important for activity and for the binding to a putative membrane receptor. PSK-alpha is produced by endopeptidase digestion. PSK-beta is produced from PSK-alpha by exopeptidase digestion. In terms of tissue distribution, expressed throughout the seedling. More abundant in fragments containing shoot or root apexes where cells proliferate vigorously.

The protein resides in the secreted. In terms of biological role, promotes plant cell differentiation, organogenesis and somatic embryogenesis as well as cell proliferation. The polypeptide is Phytosulfokines 1 (PSK1) (Oryza sativa subsp. japonica (Rice)).